Consider the following 449-residue polypeptide: Glucose-6-phosphate isomerase (449 aa).

The active-site Proton donor is the E291. Active-site residues include H312 and K426.

The protein belongs to the GPI family.

It localises to the cytoplasm. It carries out the reaction alpha-D-glucose 6-phosphate = beta-D-fructose 6-phosphate. It functions in the pathway carbohydrate biosynthesis; gluconeogenesis. The protein operates within carbohydrate degradation; glycolysis; D-glyceraldehyde 3-phosphate and glycerone phosphate from D-glucose: step 2/4. Functionally, catalyzes the reversible isomerization of glucose-6-phosphate to fructose-6-phosphate. In Streptococcus equi subsp. zooepidemicus (strain MGCS10565), this protein is Glucose-6-phosphate isomerase.